The sequence spans 83 residues: Cytochrome c oxidase subunit 12, mitochondrial (83 aa).

The CHCH domain maps to Thr-24–Trp-67. Residues Cys-27–Cys-37 carry the Cx9C motif motif. Disulfide bonds link Cys-27-Cys-59 and Cys-37-Cys-48. The Cx10C motif motif lies at Cys-48–Cys-59. A Phosphoserine modification is found at Ser-82.

It belongs to the cytochrome c oxidase subunit 6B family. Component of the cytochrome c oxidase (complex IV, CIV), a multisubunit enzyme composed of 12 subunits. The complex is composed of a catalytic core of 3 subunits COX1, COX2 and COX3, encoded in the mitochondrial DNA, and 9 supernumerary subunits COX4, COX5A (or COX5B), COX6, COX7, COX8, COX9, COX12, COX13 and COX26, which are encoded in the nuclear genome. The complex exists as a monomer or a dimer and forms supercomplexes (SCs) in the inner mitochondrial membrane with a dimer of ubiquinol-cytochrome c oxidoreductase (cytochrome b-c1 complex, complex III, CIII), resulting in 2 different assemblies (supercomplexes III(2)IV and III(2)IV(2)).

The protein localises to the mitochondrion inner membrane. It participates in energy metabolism; oxidative phosphorylation. Component of the cytochrome c oxidase, the last enzyme in the mitochondrial electron transport chain which drives oxidative phosphorylation. The respiratory chain contains 3 multisubunit complexes succinate dehydrogenase (complex II, CII), ubiquinol-cytochrome c oxidoreductase (cytochrome b-c1 complex, complex III, CIII) and cytochrome c oxidase (complex IV, CIV), that cooperate to transfer electrons derived from NADH and succinate to molecular oxygen, creating an electrochemical gradient over the inner membrane that drives transmembrane transport and the ATP synthase. Cytochrome c oxidase is the component of the respiratory chain that catalyzes the reduction of oxygen to water. Electrons originating from reduced cytochrome c in the intermembrane space (IMS) are transferred via the dinuclear copper A center (CU(A)) of COX2 and heme A of COX1 to the active site in COX1, a binuclear center (BNC) formed by heme A3 and copper B (CU(B)). The BNC reduces molecular oxygen to 2 water molecules unsing 4 electrons from cytochrome c in the IMS and 4 protons from the mitochondrial matrix. The polypeptide is Cytochrome c oxidase subunit 12, mitochondrial (COX12) (Saccharomyces cerevisiae (strain ATCC 204508 / S288c) (Baker's yeast)).